The primary structure comprises 224 residues: Ribose-5-phosphate isomerase A (224 aa).

Substrate-binding positions include 32–35, 85–88, and 98–101; these read TGST, DGAD, and KGGG. Residue E107 is the Proton acceptor of the active site. Position 125 (K125) interacts with substrate.

The protein belongs to the ribose 5-phosphate isomerase family. Homodimer.

It carries out the reaction aldehydo-D-ribose 5-phosphate = D-ribulose 5-phosphate. It participates in carbohydrate degradation; pentose phosphate pathway; D-ribose 5-phosphate from D-ribulose 5-phosphate (non-oxidative stage): step 1/1. Its function is as follows. Catalyzes the reversible conversion of ribose-5-phosphate to ribulose 5-phosphate. This chain is Ribose-5-phosphate isomerase A, found in Pseudomonas entomophila (strain L48).